Reading from the N-terminus, the 307-residue chain is Mitochondrial brown fat uncoupling protein 1 (307 aa).

The Mitochondrial intermembrane segment spans residues 1-10 (MVSLTTSEVH). Residues 11 to 32 (PTMGVKTFSAGISACLADIITF) form a helical membrane-spanning segment. 3 Solcar repeats span residues 11-102 (PTMG…VQEY), 111-201 (PTLG…MKGA), and 210-295 (DDVP…LKKE). Topologically, residues 33–73 (PLDTAKVRLQIQGEGQTSSTIRYKGVLGTITTLAKTEGWPK) are mitochondrial matrix. Lysine 56 contacts fatty acid 16:0. Residues 74–96 (LYSGLPAGIQRQISFASLRIGLY) form a helical membrane-spanning segment. The Mitochondrial intermembrane segment spans residues 97 to 116 (DTVQEYFSSGKETPPTLGNR). The chain crosses the membrane as a helical span at residues 117–133 (ISAGLMTGGVAVFIGQP). The Mitochondrial matrix portion of the chain corresponds to 134 to 178 (TEVVKVRLQAQSHLHGIKPRYTGTYNAYRIIATTESFSTLWKGTT). Residues 179–195 (PNLMRNVIINRTELVTY) form a helical membrane-spanning segment. The Mitochondrial intermembrane segment spans residues 196–212 (DLMKGALVNNQILADDV). The chain crosses the membrane as a helical span at residues 213-232 (PCHLLSALVAGFCTTFLASP). Over 233 to 266 (ADVVKTRFINSLPGQYPSVPSCAMTMLTKEGPTA) the chain is Mitochondrial matrix. Cysteine 254 is modified (cysteine sulfenic acid (-SOH)). The chain crosses the membrane as a helical span at residues 267–289 (FFKGFVPSFLRLASWNVIMFVCF). Lysine 269 lines the fatty acid 16:0 pocket. Over 290-307 (EQLKKELMKSRQTMDCTT) the chain is Mitochondrial intermembrane.

It belongs to the mitochondrial carrier (TC 2.A.29) family. As to quaternary structure, most probably functions as a monomer. Binds one purine nucleotide per monomer. However, has also been suggested to function as a homodimer or a homotetramer. Tightly associates with cardiolipin in the mitochondrion inner membrane; may stabilize and regulate its activity. May undergo sulfenylation upon cold exposure. May increase the sensitivity of UCP1 thermogenic function to the activation by noradrenaline probably through structural effects. In terms of processing, may undergo ubiquitin-mediated proteasomal degradation.

The protein localises to the mitochondrion inner membrane. The catalysed reaction is H(+)(in) = H(+)(out). Has no constitutive proton transporter activity and has to be activated by long-chain fatty acids/LCFAs. Inhibited by purine nucleotides. Both purine nucleotides and LCFAs bind the cytosolic side of the transporter and directly compete to activate or inhibit it. Activated by noradrenaline and reactive oxygen species. Despite lacking canonical translational encoding for selenocysteine, a small pool of the protein has been observed to selectively incorporate selenocysteine at 'Cys-254'. Selenocysteine-modified protein is highly sensitive to redox modification and may constitute a pool of protein highly sensitive to activation by elevated levels of reactive oxygen species (ROS). In terms of biological role, mitochondrial protein responsible for thermogenic respiration, a specialized capacity of brown adipose tissue and beige fat that participates in non-shivering adaptive thermogenesis to temperature and diet variations and more generally to the regulation of energy balance. Functions as a long-chain fatty acid/LCFA and proton symporter, simultaneously transporting one LCFA and one proton through the inner mitochondrial membrane. However, LCFAs remaining associated with the transporter via their hydrophobic tails, it results in an apparent transport of protons activated by LCFAs. Thereby, dissipates the mitochondrial proton gradient and converts the energy of substrate oxydation into heat instead of ATP. Regulates the production of reactive oxygen species/ROS by mitochondria. The chain is Mitochondrial brown fat uncoupling protein 1 from Dicrostonyx groenlandicus (Northern collared lemming).